Consider the following 185-residue polypeptide: Photosystem I assembly protein Ycf4 (185 aa).

2 helical membrane-spanning segments follow: residues 20-40 and 57-77; these read GNFF…SVGA and ILFF…LFIS.

This sequence belongs to the Ycf4 family.

The protein localises to the plastid. It is found in the chloroplast thylakoid membrane. In terms of biological role, seems to be required for the assembly of the photosystem I complex. In Lolium perenne (Perennial ryegrass), this protein is Photosystem I assembly protein Ycf4.